A 470-amino-acid chain; its full sequence is 6-phospho-beta-galactosidase (470 aa).

D-galactose 6-phosphate-binding residues include Gln19, His116, Asn159, Glu160, and Asn297. The active-site Proton donor is the Glu160. Glu375 serves as the catalytic Nucleophile. Residues Ser430, Trp431, Lys437, and Tyr439 each coordinate D-galactose 6-phosphate.

The protein belongs to the glycosyl hydrolase 1 family.

It carries out the reaction a 6-phospho-beta-D-galactoside + H2O = D-galactose 6-phosphate + an alcohol. It participates in carbohydrate metabolism; lactose degradation; D-galactose 6-phosphate and beta-D-glucose from lactose 6-phosphate: step 1/1. This Staphylococcus aureus (strain USA300) protein is 6-phospho-beta-galactosidase.